Here is a 2094-residue protein sequence, read N- to C-terminus: Protein Ycf2 (2094 aa).

Residue 1385 to 1392 coordinates ATP; it reads GPPETGRS.

It belongs to the Ycf2 family.

The protein localises to the plastid. The protein resides in the chloroplast stroma. In terms of biological role, probable ATPase of unknown function. Its presence in a non-photosynthetic plant (Epifagus virginiana) and experiments in tobacco indicate that it has an essential function which is probably not related to photosynthesis. The chain is Protein Ycf2 from Huperzia lucidula (Shining clubmoss).